The sequence spans 96 residues: Aspartyl/glutamyl-tRNA(Asn/Gln) amidotransferase subunit C (96 aa).

This sequence belongs to the GatC family. As to quaternary structure, heterotrimer of A, B and C subunits.

It carries out the reaction L-glutamyl-tRNA(Gln) + L-glutamine + ATP + H2O = L-glutaminyl-tRNA(Gln) + L-glutamate + ADP + phosphate + H(+). The catalysed reaction is L-aspartyl-tRNA(Asn) + L-glutamine + ATP + H2O = L-asparaginyl-tRNA(Asn) + L-glutamate + ADP + phosphate + 2 H(+). Its function is as follows. Allows the formation of correctly charged Asn-tRNA(Asn) or Gln-tRNA(Gln) through the transamidation of misacylated Asp-tRNA(Asn) or Glu-tRNA(Gln) in organisms which lack either or both of asparaginyl-tRNA or glutaminyl-tRNA synthetases. The reaction takes place in the presence of glutamine and ATP through an activated phospho-Asp-tRNA(Asn) or phospho-Glu-tRNA(Gln). The chain is Aspartyl/glutamyl-tRNA(Asn/Gln) amidotransferase subunit C from Leptospira interrogans serogroup Icterohaemorrhagiae serovar copenhageni (strain Fiocruz L1-130).